Consider the following 453-residue polypeptide: uncharacterized protein (453 aa).

This is an uncharacterized protein from Caenorhabditis elegans.